Consider the following 66-residue polypeptide: Jindongenin-1a (66 aa).

The N-terminal stretch at 1–22 (MFTLKKPLLLLFFLGTVSLSLC) is a signal peptide. A propeptide spanning residues 23 to 40 (EQERAADDDEGEVIEEEV) is cleaved from the precursor. Cys-60 and Cys-66 form a disulfide bridge.

Expressed by the skin glands.

The protein resides in the secreted. Displays broad-spectrum antibacterial activity against a range of Gram-positive and Gram-negative bacteria. Also displays antifungal activity against C.albicans ATCC 2002. Has low hemolytic activity, low cytotoxicity and low antioxidant activity. The polypeptide is Jindongenin-1a (Amolops jingdongensis (Chinese torrent frog)).